Consider the following 583-residue polypeptide: MAGRRVNVNVGVLGHIDSGKTALARALSTTASTAAFDKQPQSRERGITLDLGFSCFVVPLPGAEPGSSDTLLQVTLVDCPGHASLIRTIIGGAQIIDLMMLVIDVTKGMQTQSAECLVIGQIACQKLVVVLNKIDLLAEGKRQAAIDKMTKKMQKTLENTKFRGAPIIPVAAKPGGPEAPETEAPQGISELIELLKSQISIPTRDPSGPFLMSVDHCFSIKGQGTVMTGTILSGTISLGDSVEIPALKVVKKVKSMQMFHTPVTSAMQGDRLGICVTQFDPKLLERGLVCAPESLHTVHAALISVEKIPYFRGPLQTKAKFHITVGHETVMGRTLFFSPAPDSFDLEPVLDSFDLSREYLFQEQYLCKDSMPTATEGDDEADPKAGHAPGGHCPRQQWALVEFEKPVTCPRLCLVIGSRLDADIHTNTCRLAFHGVLLQGLEDKNYIESFLPALRVYKLKHKHGLVERVMDDYSVIGRSLFKKETNIQLFVGLKVQLSTGEQGIIDSAFGQSGKFKIHIPGGLSPESKKILTPTLKKRSRAGRGETTKPEEGTERPEPIQPVTLNLSFKRYVFDTQKRMVQTP.

Positions 5–203 (RVNVNVGVLG…LLKSQISIPT (199 aa)) constitute a tr-type G domain. The interval 14 to 21 (GHIDSGKT) is G1. Positions 19, 21, and 22 each coordinate GTP. Mg(2+) is bound at residue threonine 21. The segment at 46 to 50 (GITLD) is G2. Residues threonine 48 and aspartate 78 each contribute to the Mg(2+) site. Positions 78–81 (DCPG) are G3. The G4 stretch occupies residues 132 to 135 (NKID). GTP contacts are provided by aspartate 135 and lysine 173. Positions 171–173 (AAK) are G5. The segment at 371 to 390 (MPTATEGDDEADPKAGHAPG) is disordered. Serine 524 bears the Phosphoserine mark. The segment at 528-562 (KKILTPTLKKRSRAGRGETTKPEEGTERPEPIQPV) is disordered. Threonine 532 bears the Phosphothreonine mark. The short motif at 534–540 (TLKKRSR) is the Nuclear localization signal element. Residues 542 to 557 (GRGETTKPEEGTERPE) show a composition bias toward basic and acidic residues. The residue at position 543 (arginine 543) is an Omega-N-methylarginine.

Belongs to the TRAFAC class translation factor GTPase superfamily. Classic translation factor GTPase family. SelB subfamily. The cofactor is Mg(2+). Requires Mn(2+) as cofactor.

It localises to the cytoplasm. The protein resides in the nucleus. It catalyses the reaction GTP + H2O = GDP + phosphate + H(+). Functionally, translation factor required for the incorporation of the rare amino acid selenocysteine encoded by UGA codons. Replaces the eRF1-eRF3-GTP ternary complex for the insertion of selenocysteine directed by the UGA codon. Insertion of selenocysteine at UGA codons is mediated by SECISBP2 and EEFSEC: SECISBP2 (1) specifically binds the SECIS sequence once the 80S ribosome encounters an in-frame UGA codon and (2) contacts the RPS27A/eS31 of the 40S ribosome before ribosome stalling. (3) GTP-bound EEFSEC then delivers selenocysteinyl-tRNA(Sec) to the 80S ribosome and adopts a preaccommodated state conformation. (4) After GTP hydrolysis, EEFSEC dissociates from the assembly, selenocysteinyl-tRNA(Sec) accommodates, and peptide bond synthesis and selenoprotein elongation occur. In Mus musculus (Mouse), this protein is Selenocysteine-specific elongation factor (Eefsec).